The following is an 837-amino-acid chain: A disintegrin and metalloproteinase with thrombospondin motifs 4 (837 aa).

An N-terminal signal peptide occupies residues 1-51; that stretch reads MSQTGSHPGRGLAGRWLWGAQPCLLLPIVPLSWLVWLLLLLLASLLPSARL. The propeptide occupies 52-212; that stretch reads ASPLPREEEI…PSPRPRRAKR (161 aa). N-linked (GlcNAc...) asparagine glycosylation occurs at Asn68. Residues 166 to 191 form a disordered region; that stretch reads EGGTPNSAGGPGAHILRRKSPASGQG. The Cysteine switch motif lies at 192–199; it reads PMCNVKAP. Zn(2+) is bound at residue Cys194. A Peptidase M12B domain is found at 218–428; the sequence is RFVETLVVAD…GYGHCLLDKP (211 aa). 11 disulfides stabilise this stretch: Cys293-Cys345, Cys322-Cys327, Cys339-Cys423, Cys377-Cys407, Cys449-Cys472, Cys460-Cys482, Cys467-Cys501, Cys495-Cys506, Cys532-Cys569, Cys536-Cys574, and Cys547-Cys559. His361 lines the Zn(2+) pocket. The active site involves Glu362. Residues His365 and His371 each contribute to the Zn(2+) site. Residues 437 to 519 enclose the Disintegrin domain; it reads TFPGKDYDAD…DQLQDFNIPQ (83 aa). Residues 520-575 form the TSP type-1 domain; that stretch reads AGGWGPWGPWGDCSRTCGGGVQFSSRDCTRPVPRNGGKYCEGRRTRFRSCNTEDCP. Residues 686–837 form a spacer region; sequence SKQSGSFRKF…LRRRPWVGRK (152 aa).

In terms of assembly, interacts with SRPX2. Zn(2+) serves as cofactor. Post-translationally, the precursor is cleaved by a furin endopeptidase. Glycosylated. Can be O-fucosylated by POFUT2 on a serine or a threonine residue found within the consensus sequence C1-X(2)-(S/T)-C2-G of the TSP type-1 repeat domains where C1 and C2 are the first and second cysteine residue of the repeat, respectively. Fucosylated repeats can then be further glycosylated by the addition of a beta-1,3-glucose residue by the glucosyltransferase, B3GALTL. Fucosylation mediates the efficient secretion of ADAMTS family members. Can also be C-glycosylated with one or two mannose molecules on tryptophan residues within the consensus sequence W-X-X-W of the TPRs, and N-glycosylated. These other glycosylations can also facilitate secretion.

It is found in the secreted. Its subcellular location is the extracellular space. The protein resides in the extracellular matrix. The enzyme catalyses Glutamyl endopeptidase. Bonds cleaved include 370-Thr-Glu-Gly-Glu-|-Ala-Arg-Gly-Ser-377 in the interglobular domain of mammalian aggrecan.. In terms of biological role, cleaves aggrecan, a cartilage proteoglycan, at the '392-Glu-|-Ala-393' site and may be involved in its turnover. Also cleaves COMP. May play an important role in the destruction of aggrecan in arthritic diseases. This Pongo abelii (Sumatran orangutan) protein is A disintegrin and metalloproteinase with thrombospondin motifs 4 (ADAMTS4).